Here is a 460-residue protein sequence, read N- to C-terminus: Cyclin-A1-1 (460 aa).

Disordered regions lie at residues Met-1–Gln-52 and Pro-95–Gln-126. 2 stretches are compositionally biased toward low complexity: residues Ser-10–Ser-19 and Ser-100–Ser-111.

Belongs to the cyclin family. Cyclin AB subfamily. In terms of assembly, interacts with FZR2/CCS52A1, FZR1/CCS52A2 and FZR3/CCS52B.

The sequence is that of Cyclin-A1-1 (CYCA1-1) from Arabidopsis thaliana (Mouse-ear cress).